We begin with the raw amino-acid sequence, 683 residues long: Glycine--tRNA ligase beta subunit (683 aa).

This sequence belongs to the class-II aminoacyl-tRNA synthetase family. Tetramer of two alpha and two beta subunits.

It is found in the cytoplasm. The catalysed reaction is tRNA(Gly) + glycine + ATP = glycyl-tRNA(Gly) + AMP + diphosphate. In Pseudomonas putida (strain GB-1), this protein is Glycine--tRNA ligase beta subunit.